Reading from the N-terminus, the 507-residue chain is Fumarate hydratase, mitochondrial (507 aa).

A mitochondrion-targeting transit peptide spans Met1 to Met41. N6-acetyllysine; alternate is present on residues Lys58, Lys63, and Lys77. N6-succinyllysine; alternate is present on residues Lys58, Lys63, and Lys77. Thr82 carries the post-translational modification Phosphothreonine. Residues Lys112 and Lys119 each carry the N6-acetyllysine; alternate modification. An N6-succinyllysine; alternate mark is found at Lys112 and Lys119. Substrate contacts are provided by residues Ser142 to Thr144, His173 to Asp176, and Ser183 to Asn185. At Lys210 the chain carries N6-acetyllysine. An N6-acetyllysine; alternate modification is found at Lys220. Lys220 is subject to N6-succinyllysine; alternate. Thr231 contributes to the substrate binding site. His232 (proton donor/acceptor) is an active-site residue. At Thr233 the chain carries Phosphothreonine. Lys289 is subject to N6-acetyllysine; alternate. Residue Lys289 is modified to N6-succinyllysine; alternate. Ser362 is an active-site residue. Substrate contacts are provided by residues Ser363 and Lys368–Asn370. Ser363 carries the post-translational modification Phosphoserine. N6-succinyllysine is present on residues Lys464 and Lys470. Residue Lys499 is modified to N6-acetyllysine.

Belongs to the class-II fumarase/aspartase family. Fumarase subfamily. As to quaternary structure, homotetramer. Interacts with H2AZ1. In terms of processing, phosphorylation at Thr-233 by PRKDC in response to DNA damage promotes translocation to the nucleus and recruitment to DNA double-strand breaks (DSBs).

The protein localises to the mitochondrion. It is found in the cytoplasm. The protein resides in the cytosol. Its subcellular location is the nucleus. It localises to the chromosome. The enzyme catalyses (S)-malate = fumarate + H2O. It participates in carbohydrate metabolism; tricarboxylic acid cycle; (S)-malate from fumarate: step 1/1. Its function is as follows. Catalyzes the reversible stereospecific interconversion of fumarate to L-malate. Experiments in different species have demonstrated that specific isoforms of this protein act in defined pathways and favor one direction over the other. In terms of biological role, catalyzes the hydration of fumarate to L-malate in the tricarboxylic acid (TCA) cycle to facilitate a transition step in the production of energy in the form of NADH. Catalyzes the dehydration of L-malate to fumarate. Fumarate metabolism in the cytosol plays a role during urea cycle and arginine metabolism; fumarate being a by-product of the urea cycle and amino-acid catabolism. Also plays a role in DNA repair by promoting non-homologous end-joining (NHEJ). In response to DNA damage and phosphorylation by PRKDC, translocates to the nucleus and accumulates at DNA double-strand breaks (DSBs): acts by catalyzing formation of fumarate, an inhibitor of KDM2B histone demethylase activity, resulting in enhanced dimethylation of histone H3 'Lys-36' (H3K36me2). In Mus musculus (Mouse), this protein is Fumarate hydratase, mitochondrial.